The primary structure comprises 331 residues: L-lactate dehydrogenase A chain (331 aa).

NAD(+) is bound by residues 29-57 (GMVG…MEDK) and R98. Positions 105, 137, and 168 each coordinate substrate. N137 contributes to the NAD(+) binding site. The Proton acceptor role is filled by H192. A substrate-binding site is contributed by T247.

Belongs to the LDH/MDH superfamily. LDH family. In terms of assembly, homotetramer.

It localises to the cytoplasm. The catalysed reaction is (S)-lactate + NAD(+) = pyruvate + NADH + H(+). It participates in fermentation; pyruvate fermentation to lactate; (S)-lactate from pyruvate: step 1/1. Its function is as follows. Interconverts simultaneously and stereospecifically pyruvate and lactate with concomitant interconversion of NADH and NAD(+). The chain is L-lactate dehydrogenase A chain (ldha) from Patagonotothen tessellata (Black southern cod).